Consider the following 795-residue polypeptide: Phenylalanine--tRNA ligase beta subunit (795 aa).

A tRNA-binding domain is found at 39–148 (AGSFHGVVVG…ADAPIGTDIR (110 aa)). The region spanning 401–476 (PKRATITLRR…RVYGYNNIPD (76 aa)) is the B5 domain. D454, D460, E463, and E464 together coordinate Mg(2+). The 94-residue stretch at 701 to 794 (SRFPANRRDI…LKERFQASLR (94 aa)) folds into the FDX-ACB domain.

Belongs to the phenylalanyl-tRNA synthetase beta subunit family. Type 1 subfamily. As to quaternary structure, tetramer of two alpha and two beta subunits. It depends on Mg(2+) as a cofactor.

Its subcellular location is the cytoplasm. It carries out the reaction tRNA(Phe) + L-phenylalanine + ATP = L-phenylalanyl-tRNA(Phe) + AMP + diphosphate + H(+). In Shigella dysenteriae serotype 1 (strain Sd197), this protein is Phenylalanine--tRNA ligase beta subunit.